Consider the following 361-residue polypeptide: ETS translocation variant 3-like protein (361 aa).

Residues 39 to 120 (IQLWHFILEL…KGKRFTYKFN (82 aa)) constitute a DNA-binding region (ETS). The interval 178 to 201 (LTGQQTPRGPPETSGDKKGSSSSV) is disordered.

This sequence belongs to the ETS family.

Its subcellular location is the nucleus. Transcriptional regulator. This is ETS translocation variant 3-like protein (ETV3L) from Homo sapiens (Human).